A 551-amino-acid polypeptide reads, in one-letter code: MIRIINGQTYFTSKYPNIIIPEKPIPHLILKHIRYKPDQVLLVDGLTFKEYSSHFVADTIEKVACGLNKLNIKKGDVLGVILPNLPEYVPIFHGTLLMGGITSLVNPDYTIEELSHTLATVSPRYLAVTLAVYEKIKNDLKRVFPSVEKVILVDIAGQTLKEIDQLTLSSDGIVMSFNQLTNNNGKDYPIVRIDLTKDTAIIPFSSGTTGLFKGVCLSHYNLVSNTYQTQTIETSTYKKNDSVIGVLPFFHSFGLMLHIMLMVKQGYRIVTLPKFEPVRFLELIKKYKVAMSFIVPPIAIMFAKSPIVDKFDLSSLRTLFCGAAPLGSEIEDLIKERFKGRLVIKQGYGATELSPCCFVTPNGLVKSGSSGTLLPNLLAKIISSETGENLGMGEKGEICIKGPNVMLGYYNNEKATNEVIDKDGFLKTGDIGYVDEDGYFFIIDRSKELIKCKGFQVPPAELEALLLSHPKVADACVVGLSKGDMGEVPRGFVVIKQNESLTEKELLDWAHPKIANYKHFRGGIFFIPAIPKSATGKLLRKNLKDFNNLKL.

Positions 205, 206, 207, 208, 209, and 213 each coordinate ATP. (E)-4-coumaroyl-AMP is bound at residue Phe253. Residue Lys274 coordinates CoA. An SBD1 region spans residues 276-346 (EPVRFLELIK…RFKGRLVIKQ (71 aa)). (E)-4-coumaroyl-AMP contacts are provided by Ala323, Gln346, Gly347, and Thr351. 5 residues coordinate ATP: Gln346, Gly347, Thr351, Asp430, and Arg445. An SBD2 region spans residues 347-409 (GYGATELSPC…IKGPNVMLGY (63 aa)). 2 residues coordinate (E)-4-coumaroyl-AMP: Lys447 and Lys451. Positions 453 and 454 each coordinate CoA. Position 537 (Lys537) interacts with ATP.

It belongs to the ATP-dependent AMP-binding enzyme family. Mg(2+) serves as cofactor.

It carries out the reaction (E)-4-coumarate + ATP + CoA = (E)-4-coumaroyl-CoA + AMP + diphosphate. The enzyme catalyses (E)-4-coumarate + ATP + H(+) = (E)-4-coumaroyl-AMP + diphosphate. It catalyses the reaction (E)-4-coumaroyl-AMP + CoA = (E)-4-coumaroyl-CoA + AMP + H(+). It functions in the pathway phytoalexin biosynthesis; 3,4',5-trihydroxystilbene biosynthesis; 3,4',5-trihydroxystilbene from trans-4-coumarate: step 1/2. Its function is as follows. Carboxylate--CoA ligase that may use 4-coumarate as substrate. Follows a two-step reaction mechanism, wherein the carboxylate substrate first undergoes adenylation by ATP, followed by a thioesterification in the presence of CoA to yield the final CoA thioester. This Dictyostelium discoideum (Social amoeba) protein is Probable 4-coumarate--CoA ligase 3 (4cl3).